The primary structure comprises 204 residues: ATP phosphoribosyltransferase (204 aa).

Belongs to the ATP phosphoribosyltransferase family. Short subfamily. Heteromultimer composed of HisG and HisZ subunits.

Its subcellular location is the cytoplasm. The enzyme catalyses 1-(5-phospho-beta-D-ribosyl)-ATP + diphosphate = 5-phospho-alpha-D-ribose 1-diphosphate + ATP. The protein operates within amino-acid biosynthesis; L-histidine biosynthesis; L-histidine from 5-phospho-alpha-D-ribose 1-diphosphate: step 1/9. Its function is as follows. Catalyzes the condensation of ATP and 5-phosphoribose 1-diphosphate to form N'-(5'-phosphoribosyl)-ATP (PR-ATP). Has a crucial role in the pathway because the rate of histidine biosynthesis seems to be controlled primarily by regulation of HisG enzymatic activity. In Leptospira biflexa serovar Patoc (strain Patoc 1 / Ames), this protein is ATP phosphoribosyltransferase.